Here is a 205-residue protein sequence, read N- to C-terminus: Probable NAD(P)H dehydrogenase (quinone) FQR1-like 1 (205 aa).

In terms of domain architecture, Flavodoxin-like spans 5–192; sequence VYIVYYSMYG…GQAFHQGKYI (188 aa). Residues 11 to 15, 112 to 165, and histidine 136 contribute to the FMN site; these read SMYGH and IFYS…SPYG. Tyrosine 13 lines the NAD(+) pocket.

Belongs to the WrbA family. The cofactor is FMN.

It localises to the cell membrane. It catalyses the reaction a quinone + NADH + H(+) = a quinol + NAD(+). The enzyme catalyses a quinone + NADPH + H(+) = a quinol + NADP(+). Its function is as follows. Catalyzes the transfer of electrons from NADH and NADPH to reduce quinone to the hydroquinone state. This chain is Probable NAD(P)H dehydrogenase (quinone) FQR1-like 1, found in Arabidopsis thaliana (Mouse-ear cress).